Consider the following 355-residue polypeptide: UDP-galactose translocator 1 (355 aa).

The disordered stretch occupies residues 1-36 (MKFQNVHISHQDEDKEKLLPNDKDVEKADESPSSSR). Residues 9 to 30 (SHQDEDKEKLLPNDKDVEKADE) show a composition bias toward basic and acidic residues. 6 helical membrane passes run 40-60 (VFKC…TLTI), 177-197 (WMAI…NVSA), 211-231 (IVGL…GVYF), 282-302 (VWAV…VMRY), 309-329 (SMAS…IFPD), and 330-350 (IFIG…VLLY).

The protein belongs to the nucleotide-sugar transporter family. SLC35A subfamily.

The protein localises to the membrane. Its subcellular location is the cytoplasmic granule membrane. The polypeptide is UDP-galactose translocator 1 (ugtp-1) (Caenorhabditis elegans).